The sequence spans 176 residues: Prion-like protein doppel (176 aa).

An N-terminal signal peptide occupies residues 1 to 25; it reads MRKHLSWWWLATVCMLLFSHLSAVQ. The interval 27 to 50 is flexible tail; the sequence is RGIKHRIKWNRKALPSTAQITEAQ. A glycan (O-linked (GalNAc...) threonine) is linked at T43. The globular stretch occupies residues 51 to 152; it reads VAENRPGAFI…KHCEFWLERG (102 aa). 2 disulfides stabilise this stretch: C94-C145 and C108-C140. N-linked (GlcNAc...) asparagine glycans are attached at residues N98 and N110. Residues 122–139 are cu(2+) binding; it reads KPDNKLHQQVLWRLVQEL. G152 carries the GPI-anchor amidated glycine lipid modification. A propeptide spans 153–176 (removed in mature form); it reads AGLRVTMHQPVLLCLLALIWLTVK.

It belongs to the prion family. N-glycosylated. N-glycosylated at two distinct sites. In terms of processing, O-glycosylated. Expressed in testis, in Sertoli cells, ejaculated spermatozoa and in seminal fluid (at protein level).

Its subcellular location is the cell membrane. Its function is as follows. Required for normal acrosome reaction and for normal male fertility. Can bind Cu(2+). The chain is Prion-like protein doppel (PRND) from Homo sapiens (Human).